A 257-amino-acid chain; its full sequence is Putative transcription factor R430 (257 aa).

Disordered stretches follow at residues 1 to 35 (MEKFFITDNTTDNTTDNTTDNTTDNTTDKLTDNNS) and 58 to 77 (SLKSPSDKSSSGKSSIPNKS). Low complexity predominate over residues 7–25 (TDNTTDNTTDNTTDNTTDN). Positions 26-35 (TTDKLTDNNS) are enriched in basic and acidic residues.

Belongs to the nucleo-cytoplasmic large DNA viruses (NCLDVs) VLTF-3 family.

In terms of biological role, putative transcription factor. This chain is Putative transcription factor R430, found in Acanthamoeba polyphaga (Amoeba).